Reading from the N-terminus, the 374-residue chain is Chaperone protein DnaJ (374 aa).

In terms of domain architecture, J spans 5 to 70; the sequence is DYYEVLGVER…SKRAAFDQYG (66 aa). The segment at 133 to 211 adopts a CR-type zinc-finger fold; sequence GTTVSIRVPT…CHGEGRVEEY (79 aa). Residues C146, C149, C163, C166, C185, C188, C199, and C202 each contribute to the Zn(2+) site. 4 CXXCXGXG motif repeats span residues 146 to 153, 163 to 170, 185 to 192, and 199 to 206; these read CQPCDGSG, CPTCGGIG, CPRCHGQG, and CTSCHGEG.

It belongs to the DnaJ family. As to quaternary structure, homodimer. Zn(2+) is required as a cofactor.

It is found in the cytoplasm. Functionally, participates actively in the response to hyperosmotic and heat shock by preventing the aggregation of stress-denatured proteins and by disaggregating proteins, also in an autonomous, DnaK-independent fashion. Unfolded proteins bind initially to DnaJ; upon interaction with the DnaJ-bound protein, DnaK hydrolyzes its bound ATP, resulting in the formation of a stable complex. GrpE releases ADP from DnaK; ATP binding to DnaK triggers the release of the substrate protein, thus completing the reaction cycle. Several rounds of ATP-dependent interactions between DnaJ, DnaK and GrpE are required for fully efficient folding. Also involved, together with DnaK and GrpE, in the DNA replication of plasmids through activation of initiation proteins. This is Chaperone protein DnaJ from Pseudomonas putida (strain GB-1).